A 295-amino-acid chain; its full sequence is Voltage-gated potassium channel (295 aa).

The Cytoplasmic segment spans residues Met-1–Pro-38. A helical membrane pass occupies residues Leu-39 to Leu-63. The Extracellular segment spans residues Ser-64 to Tyr-67. A helical membrane pass occupies residues Leu-68–Lys-92. The Cytoplasmic portion of the chain corresponds to Ser-93–Pro-96. Residues Ala-97 to Tyr-105 constitute an intramembrane region (helical). Over Glu-106–Pro-108 the chain is Extracellular. The helical; Voltage-sensor transmembrane segment at Ala-109–Gly-125 threads the bilayer. Over Leu-126 to Leu-128 the chain is Cytoplasmic. The chain crosses the membrane as a helical; Voltage-sensor span at residues Phe-129–Ser-145. At Arg-146–Asp-159 the chain is on the cytoplasmic side. Residues Lys-160–Val-184 form a helical membrane-spanning segment. The Extracellular portion of the chain corresponds to Glu-185–Ser-195. The pore-forming intramembrane region spans Val-196–Thr-208. A Selectivity filter motif is present at residues Thr-209–Asp-214. Over Thr-209–Ile-221 the chain is Extracellular. Residues Gly-222 to Val-253 traverse the membrane as a helical segment. The Cytoplasmic portion of the chain corresponds to Gly-254 to Lys-295.

This sequence belongs to the potassium channel family.

Its subcellular location is the cell membrane. In terms of biological role, mediates a strong voltage-dependent potassium ion permeability of excitable membranes. Assuming opened or closed conformations in response to the voltage difference across the membrane, the protein forms a potassium-selective channel through which potassium ions may pass in accordance with their electrochemical gradient. This is Voltage-gated potassium channel from Aeropyrum pernix (strain ATCC 700893 / DSM 11879 / JCM 9820 / NBRC 100138 / K1).